The chain runs to 190 residues: Small ribosomal subunit protein mS23 (190 aa).

Position 2 is an N-acetylalanine (alanine 2). Residue lysine 102 is modified to N6-acetyllysine. Residues arginine 139–proline 190 are disordered. Over residues glutamate 166 to alanine 179 the composition is skewed to basic and acidic residues.

It belongs to the mitochondrion-specific ribosomal protein mS23 family. Component of the mitochondrial small ribosomal subunit (mt-SSU). Mature mammalian 55S mitochondrial ribosomes consist of a small (28S) and a large (39S) subunit. The 28S small subunit contains a 12S ribosomal RNA (12S mt-rRNA) and 30 different proteins. The 39S large subunit contains a 16S rRNA (16S mt-rRNA), a copy of mitochondrial valine transfer RNA (mt-tRNA(Val)), which plays an integral structural role, and 52 different proteins.

The protein localises to the mitochondrion. This is Small ribosomal subunit protein mS23 (MRPS23) from Homo sapiens (Human).